The primary structure comprises 431 residues: uncharacterized protein (431 aa).

Helical transmembrane passes span 33-53 (VARVGTAAAVTALCGYAVIYL), 63-83 (FSVFGVFWGAFGLVTGAANGL), 111-131 (VSGMVGLGSLVVIAGSSPLWS), 143-163 (VALLSIGLAGFCLHATLLGML), 175-195 (LMVADAVIRVVVAAATFVIGW), 197-217 (LVGFIWATVAGSVAWLIMLMT), 241-261 (AHSIIAAGASAILVMGFPVLL), 273-293 (GVVILAVTLTRAPLLVPLTAM), 318-338 (LIGGVGAVGMLAAGVVGPWIM), 358-378 (AAAVAIAMLTLTGAAAVAAAL), 381-401 (AYSLGWVGATVGSGLLLLLPL), and 407-427 (TVVALLCGPLVGIGVHLVALA).

It to M.tuberculosis Rv1510 and M.bovis Mb3654.

It is found in the cell membrane. This is an uncharacterized protein from Mycobacterium tuberculosis (strain ATCC 25618 / H37Rv).